A 123-amino-acid polypeptide reads, in one-letter code: Small ribosomal subunit protein uS12cz/uS12cy (123 aa).

Belongs to the universal ribosomal protein uS12 family. In terms of assembly, part of the 30S ribosomal subunit.

It is found in the plastid. The protein resides in the chloroplast. Its function is as follows. With S4 and S5 plays an important role in translational accuracy. Located at the interface of the 30S and 50S subunits. The polypeptide is Small ribosomal subunit protein uS12cz/uS12cy (rps12-A) (Nandina domestica (Heavenly bamboo)).